Consider the following 414-residue polypeptide: Argininosuccinate synthase (414 aa).

Residues 15 to 23 (AYSGGLDTS) and Ala-42 each bind ATP. Residues Tyr-93 and Ser-98 each coordinate L-citrulline. Residue Gly-123 participates in ATP binding. Residues Thr-125, Asn-129, and Asp-130 each contribute to the L-aspartate site. Asn-129 contacts L-citrulline. L-citrulline-binding residues include Arg-133, Ser-182, Ser-191, Glu-267, and Tyr-279.

This sequence belongs to the argininosuccinate synthase family. Type 1 subfamily. Homotetramer.

It localises to the cytoplasm. It carries out the reaction L-citrulline + L-aspartate + ATP = 2-(N(omega)-L-arginino)succinate + AMP + diphosphate + H(+). It participates in amino-acid biosynthesis; L-arginine biosynthesis; L-arginine from L-ornithine and carbamoyl phosphate: step 2/3. In Deinococcus geothermalis (strain DSM 11300 / CIP 105573 / AG-3a), this protein is Argininosuccinate synthase.